The following is a 224-amino-acid chain: UPF0758 protein Bpro_0948 (224 aa).

In terms of domain architecture, MPN spans 102 to 224 (LFSTPQAVRD…AVSMAELGLL (123 aa)). Residues histidine 173, histidine 175, and aspartate 186 each coordinate Zn(2+). Residues 173–186 (HNHPSGAATPSRAD) carry the JAMM motif motif.

Belongs to the UPF0758 family.

The chain is UPF0758 protein Bpro_0948 from Polaromonas sp. (strain JS666 / ATCC BAA-500).